The following is a 570-amino-acid chain: Glycine--tRNA ligase (570 aa).

Residues Arg99 and Glu165 each contribute to the substrate site. ATP contacts are provided by residues 197–199 (RNE), 207–212 (IRLREF), 324–325 (EC), and 443–446 (GIDR). Residue 212–216 (FTQAE) participates in substrate binding. 439-443 (EPSFG) is a substrate binding site.

This sequence belongs to the class-II aminoacyl-tRNA synthetase family.

The protein resides in the cytoplasm. The catalysed reaction is tRNA(Gly) + glycine + ATP = glycyl-tRNA(Gly) + AMP + diphosphate. Catalyzes the attachment of glycine to tRNA(Gly). In Pyrococcus horikoshii (strain ATCC 700860 / DSM 12428 / JCM 9974 / NBRC 100139 / OT-3), this protein is Glycine--tRNA ligase.